The following is a 130-amino-acid chain: Small ribosomal subunit protein uS8 (130 aa).

This sequence belongs to the universal ribosomal protein uS8 family. As to quaternary structure, part of the 30S ribosomal subunit. Contacts proteins S5 and S12.

In terms of biological role, one of the primary rRNA binding proteins, it binds directly to 16S rRNA central domain where it helps coordinate assembly of the platform of the 30S subunit. This chain is Small ribosomal subunit protein uS8, found in Moorella thermoacetica (strain ATCC 39073 / JCM 9320).